The primary structure comprises 637 residues: Chaperone protein DnaK (637 aa).

Phosphothreonine; by autocatalysis is present on threonine 198. Over residues 601–615 (AQQKAQAEQAGADAG) the composition is skewed to low complexity. Positions 601–637 (AQQKAQAEQAGADAGEQPKQDDDVVDAEFEEVKEDKK) are disordered. Positions 623–637 (DVVDAEFEEVKEDKK) are enriched in acidic residues.

This sequence belongs to the heat shock protein 70 family.

Acts as a chaperone. In Vibrio atlanticus (strain LGP32) (Vibrio splendidus (strain Mel32)), this protein is Chaperone protein DnaK.